A 641-amino-acid chain; its full sequence is Soluble starch synthase 1, chloroplastic/amyloplastic (641 aa).

The transit peptide at 1–113 directs the protein to the chloroplast; sequence MATAAGMGIG…DSIDKTIFVA (113 aa). Residues 62–96 form a disordered region; that stretch reads TFLVPTSTPPAPTQSPAPAPTPPPLPDSGVGEIEP. The span at 68–87 shows a compositional bias: pro residues; that stretch reads STPPAPTQSPAPAPTPPPLP. Lysine 147 is a binding site for ADP-alpha-D-glucose.

It belongs to the glycosyltransferase 1 family. Bacterial/plant glycogen synthase subfamily.

The protein resides in the plastid. Its subcellular location is the chloroplast. It localises to the amyloplast. The catalysed reaction is [(1-&gt;4)-alpha-D-glucosyl](n) + ADP-alpha-D-glucose = [(1-&gt;4)-alpha-D-glucosyl](n+1) + ADP + H(+). It participates in glycan biosynthesis; starch biosynthesis. The protein is Soluble starch synthase 1, chloroplastic/amyloplastic of Oryza sativa subsp. indica (Rice).